The chain runs to 118 residues: C-type natriuretic peptide 2 (118 aa).

The first 22 residues, 1–22, serve as a signal peptide directing secretion; sequence MHFCHIVGWGLVLAVLYLRTEA. The propeptide occupies 23-96; that stretch reads KPVAQAHQKS…SRKIKGINKK (74 aa). An intrachain disulfide couples Cys-102 to Cys-118.

Belongs to the natriuretic peptide family.

The protein resides in the secreted. Functionally, exhibits natriuretic and vasodepressor activity. Has a cGMP-stimulating activity. The polypeptide is C-type natriuretic peptide 2 (Aquarana catesbeiana (American bullfrog)).